The chain runs to 446 residues: Na(+)-translocating NADH-quinone reductase subunit A (446 aa).

The protein belongs to the NqrA family. In terms of assembly, composed of six subunits; NqrA, NqrB, NqrC, NqrD, NqrE and NqrF.

The catalysed reaction is a ubiquinone + n Na(+)(in) + NADH + H(+) = a ubiquinol + n Na(+)(out) + NAD(+). Its function is as follows. NQR complex catalyzes the reduction of ubiquinone-1 to ubiquinol by two successive reactions, coupled with the transport of Na(+) ions from the cytoplasm to the periplasm. NqrA to NqrE are probably involved in the second step, the conversion of ubisemiquinone to ubiquinol. This chain is Na(+)-translocating NADH-quinone reductase subunit A, found in Vibrio atlanticus (strain LGP32) (Vibrio splendidus (strain Mel32)).